The primary structure comprises 172 residues: uncharacterized protein (172 aa).

It belongs to the archaeal NMN adenylyltransferase family.

This is an uncharacterized protein from Aeropyrum pernix (strain ATCC 700893 / DSM 11879 / JCM 9820 / NBRC 100138 / K1).